We begin with the raw amino-acid sequence, 138 residues long: Large ribosomal subunit protein uL16 (138 aa).

The span at 1–13 (MLQPARRKYRKEQ) shows a compositional bias: basic residues. Positions 1 to 21 (MLQPARRKYRKEQKGRNTGIA) are disordered.

It belongs to the universal ribosomal protein uL16 family. In terms of assembly, part of the 50S ribosomal subunit.

Its function is as follows. Binds 23S rRNA and is also seen to make contacts with the A and possibly P site tRNAs. This is Large ribosomal subunit protein uL16 from Albidiferax ferrireducens (strain ATCC BAA-621 / DSM 15236 / T118) (Rhodoferax ferrireducens).